A 176-amino-acid polypeptide reads, in one-letter code: Cytochrome c-552 (176 aa).

The chain crosses the membrane as a helical; Signal-anchor span at residues 12 to 32 (GALIGSLLFLLLMSWAASGIF). Residues cysteine 90, cysteine 93, histidine 94, methionine 126, and methionine 154 each contribute to the heme c site.

Post-translationally, binds 1 heme c group covalently per subunit.

It localises to the cell membrane. In terms of biological role, mediates the electron transport between the cytochrome bc1 complex and cytochrome-c oxidase. In Paracoccus denitrificans, this protein is Cytochrome c-552 (cycM).